A 1863-amino-acid chain; its full sequence is Breast cancer type 1 susceptibility protein (1863 aa).

Met-1 carries the post-translational modification N-acetylmethionine. An RING-type zinc finger spans residues 24–65; the sequence is CPICLELIKEPVSTKCDHIFCKFCMLKLLNQKKGPSQCPLCK. Residue Lys-109 forms a Glycyl lysine isopeptide (Lys-Gly) (interchain with G-Cter in SUMO2) linkage. The residue at position 114 (Ser-114) is a Phosphoserine. The disordered stretch occupies residues 230-270; the sequence is ETDVTNTEHHQPSNNDLNTTEKRAAERHPEKYQGSSVSNLH. The segment covering 248 to 260 has biased composition (basic and acidic residues); it reads TTEKRAAERHPEK. Lys-301 is covalently cross-linked (Glycyl lysine isopeptide (Lys-Gly) (interchain with G-Cter in SUMO2)). The disordered stretch occupies residues 306–338; the sequence is NKSKQPGLARSQHNRWAGSKETCNDRRTPSTEK. Residues 327–338 are compositionally biased toward basic and acidic residues; sequence TCNDRRTPSTEK. A Glycyl lysine isopeptide (Lys-Gly) (interchain with G-Cter in SUMO2) cross-link involves residue Lys-339. Phosphoserine occurs at positions 395, 398, 423, and 434. Residues Lys-443, Lys-459, and Lys-519 each participate in a glycyl lysine isopeptide (Lys-Gly) (interchain with G-Cter in SUMO2) cross-link. Positions 534 to 544 are enriched in low complexity; the sequence is QGTNQTEQNGQ. The segment at 534–570 is disordered; that stretch reads QGTNQTEQNGQVMNITNSGHENKTKGDSIQNEKNPNP. Ser-551 bears the Phosphoserine mark. Residues Lys-583 and Lys-654 each participate in a glycyl lysine isopeptide (Lys-Gly) (interchain with G-Cter in SUMO2) cross-link. The disordered stretch occupies residues 654 to 709; it reads KYNQMPVRHSRNLQLMEGKEPATGAKKSNKPNEQTSKRHDSDTFPELKLTNAPGSF. Residues Ser-694, Ser-708, and Ser-725 each carry the phosphoserine modification. Residues Lys-734 and Lys-739 each participate in a glycyl lysine isopeptide (Lys-Gly) (interchain with G-Cter in SUMO2) cross-link. A phosphoserine mark is found at Ser-753 and Ser-840. Residues Lys-918 and Lys-987 each participate in a glycyl lysine isopeptide (Lys-Gly) (interchain with G-Cter in SUMO2) cross-link. At Ser-988 the chain carries Phosphoserine; by CHEK2. A Phosphoserine modification is found at Ser-1009. Lys-1079 participates in a covalent cross-link: Glycyl lysine isopeptide (Lys-Gly) (interchain with G-Cter in SUMO2). Residue Ser-1143 is modified to Phosphoserine; by ATR; in vitro. The segment at 1181–1216 is disordered; sequence VQKGELSRSPSPFTHTHLAQGYRRGAKKLESSEENL. A phosphoserine mark is found at Ser-1189, Ser-1191, Ser-1211, Ser-1217, and Ser-1218. Ser-1280 carries the post-translational modification Phosphoserine; by ATR; in vitro. Positions 1322–1387 are disordered; it reads KQMRHQSESQ…VSEDCSGLSS (66 aa). Residues Ser-1328, Ser-1336, and Ser-1342 each carry the phosphoserine modification. The segment covering 1373-1387 has biased composition (polar residues); sequence ESETSVSEDCSGLSS. At Ser-1387 the chain carries Phosphoserine; by ATM and ATR. Phosphothreonine; by ATR; in vitro is present on Thr-1394. Residues 1397-1424 are interaction with PALB2; that stretch reads RDTMQHNLIKLQQEMAELEAVLEQHGSQ. The residue at position 1423 (Ser-1423) is a Phosphoserine; by ATM and ATR. The segment at 1440-1505 is disordered; sequence EDLRNPEQST…SSPSKCPSLD (66 aa). The span at 1445-1470 shows a compositional bias: polar residues; it reads PEQSTSEKAVLTSQKSSEYPISQNPE. Position 1457 is a phosphoserine; by ATR; in vitro (Ser-1457). Ser-1524 carries the phosphoserine; by ATM modification. Residue Ser-1542 is modified to Phosphoserine. The segment at 1565 to 1596 is disordered; it reads ESGISLFSDDPESDPSEDRAPESARVGNIPSS. 2 BRCT domains span residues 1642–1736 and 1756–1855; these read STER…DFEV and QDRK…TYLI.

In terms of assembly, heterodimer with BARD1. Part of the BRCA1-associated genome surveillance complex (BASC), which contains BRCA1, MSH2, MSH6, MLH1, ATM, BLM, PMS2 and the MRE11-RAD50-NBN protein (MRN) complex. This association could be a dynamic process changing throughout the cell cycle and within subnuclear domains. Component of the BRCA1-A complex, at least composed of BRCA1, BARD1, UIMC1/RAP80, ABRAXAS1, BRCC3/BRCC36, BABAM2 and BABAM1/NBA1. Interacts (via the BRCT domains) with ABRAXAS1 (phosphorylated form); this is important for recruitment to sites of DNA damage. Can form a heterotetramer with two molecules of ABRAXAS1 (phosphorylated form). Component of the BRCA1-RBBP8 complex. Interacts (via the BRCT domains) with RBBP8 ('Ser-327' phosphorylated form); the interaction ubiquitinates RBBP8, regulates CHEK1 activation, and involves RBBP8 in BRCA1-dependent G2/M checkpoint control on DNA damage. Associates with RNA polymerase II holoenzyme. Interacts with SMC1A, NELFB, DCLRE1C, CLSPN. Interacts with CHEK1, CHEK2, BAP1, BRCC3, UBXN1 and PCLAF. Interacts (via BRCT domains) with BRIP1 (phosphorylated form). Interacts with FANCD2 (ubiquitinated form). Interacts with H2AX (phosphorylated on 'Ser-140'). Interacts (via the BRCT domains) with ACACA (phosphorylated form); the interaction prevents dephosphorylation of ACACA. Part of a BRCA complex containing BRCA1, BRCA2 and PALB2. Interacts directly with PALB2; the interaction is essential for its function in HRR. Interacts directly with BRCA2; the interaction occurs only in the presence of PALB2 which serves as the bridging protein. Interacts (via the BRCT domains) with LMO4; the interaction represses the transcriptional activity of BRCA1. Interacts (via the BRCT domains) with CCAR2 (via N-terminus); the interaction represses the transcriptional activator activity of BRCA1. Interacts with EXD2. Interacts (via C-terminus) with DHX9; this interaction is direct and links BRCA1 to the RNA polymerase II holoenzyme. Interacts with DNA helicase ZGRF1; the interaction is increased following DNA damage induction. Phosphorylated in response to IR, UV, and various stimuli that cause checkpoint activation, probably by ATM or ATR. Phosphorylation at Ser-988 by CHEK2 regulates mitotic spindle assembly. Phosphorylation by AURKA regulates centrosomal microtubule nucleation. In terms of processing, autoubiquitinated, undergoes 'Lys-6'-linked polyubiquitination. 'Lys-6'-linked polyubiquitination does not promote degradation. Isoform 1 and isoform 3 are widely expressed. Isoform 3 is reduced or absent in several breast and ovarian cancer cell lines.

The protein resides in the nucleus. It localises to the chromosome. The protein localises to the cytoplasm. It catalyses the reaction S-ubiquitinyl-[E2 ubiquitin-conjugating enzyme]-L-cysteine + [acceptor protein]-L-lysine = [E2 ubiquitin-conjugating enzyme]-L-cysteine + N(6)-ubiquitinyl-[acceptor protein]-L-lysine.. It participates in protein modification; protein ubiquitination. Its activity is regulated as follows. The E3 ubiquitin-protein ligase activity is inhibited by phosphorylation by AURKA. Activity is increased by phosphatase treatment. Functionally, E3 ubiquitin-protein ligase that specifically mediates the formation of 'Lys-6'-linked polyubiquitin chains and plays a central role in DNA repair by facilitating cellular responses to DNA damage. It is unclear whether it also mediates the formation of other types of polyubiquitin chains. The BRCA1-BARD1 heterodimer coordinates a diverse range of cellular pathways such as DNA damage repair, ubiquitination and transcriptional regulation to maintain genomic stability. Regulates centrosomal microtubule nucleation. Required for appropriate cell cycle arrests after ionizing irradiation in both the S-phase and the G2 phase of the cell cycle. Required for FANCD2 targeting to sites of DNA damage. Inhibits lipid synthesis by binding to inactive phosphorylated ACACA and preventing its dephosphorylation. Contributes to homologous recombination repair (HRR) via its direct interaction with PALB2, fine-tunes recombinational repair partly through its modulatory role in the PALB2-dependent loading of BRCA2-RAD51 repair machinery at DNA breaks. Component of the BRCA1-RBBP8 complex which regulates CHEK1 activation and controls cell cycle G2/M checkpoints on DNA damage via BRCA1-mediated ubiquitination of RBBP8. Acts as a transcriptional activator. This chain is Breast cancer type 1 susceptibility protein (BRCA1), found in Homo sapiens (Human).